Consider the following 524-residue polypeptide: MEVFMFPTGTTVIISVLSVLLAVIPWYLLNKLWLKPKRFEKLLKAQGFQGEPYNLSVLKDKSKQNYMLKLQQEDKSKSIGLSKEAAPSIFTPVHQTVRKYGNNSFLWEGTTPRVIITDPDQIKDVFNKIDDFPKPKLRSIAKYLSVGILDHEGKKWAKHRKIANPAFHLEKLKVMLPAFSHSCNEMISKWKELLSSDGTCEIDVWPSLQNFTCDVISRTAFGSSYAEGTKLFQLLKKQGFLLMTGRHTNNPLWGLLATTTKTKMKEIDREIHDSLEGIIEKREKALKNGETTNDDLLGILLQSNHAEKQGQGNSKNIGMTTQDVIDECKLFYLAGQETTSSLLVWTMVLLGRYPEWQARAREEVLQVFGNQNPNNEGLSQLKIVTMILYEVLRLFPPLIYFNRALRKDLKLGNLLLPEGTQISLPILLIHQDHDLWGDDAKEFKPERFAEGIAKATKGQVSYFPFGWGPRICLGQNFALLEAKIAVSLLLQNFSFELSPNYVHVPTTVLTLQPKNGASIILHKL.

Residues 9–29 traverse the membrane as a helical segment; the sequence is GTTVIISVLSVLLAVIPWYLL. A heme-binding site is contributed by cysteine 472.

Belongs to the cytochrome P450 family. It depends on heme as a cofactor. As to expression, expressed in flowers. Detected in roots upon salt treatment.

Its subcellular location is the membrane. It catalyses the reaction 11-oxo-beta-amyrin + 3 reduced [NADPH--hemoprotein reductase] + 3 O2 = glycyrrhetinate + 3 oxidized [NADPH--hemoprotein reductase] + 4 H2O + 4 H(+). In terms of biological role, involved in the biosynthesis of triterpenoid saponins. Catalyzes three sequential oxidation steps at C-30 of 11-oxo-beta-amyrin. Also able to catalyze sequential C-30 hydroxylation of beta-amyrin to produce 30-hydroxy-beta-amyrin and 11-deoxoglycyrrhetinic acid. The polypeptide is 11-oxo-beta-amyrin 30-oxidase (CYP72A63) (Medicago truncatula (Barrel medic)).